The chain runs to 279 residues: 3-methyl-2-oxobutanoate hydroxymethyltransferase (279 aa).

2 residues coordinate Mg(2+): Asp49 and Asp88. 3-methyl-2-oxobutanoate-binding positions include 49–50 (DS), Asp88, and Lys118. Glu120 is a binding site for Mg(2+). The active-site Proton acceptor is the Glu187.

Belongs to the PanB family. As to quaternary structure, homodecamer; pentamer of dimers. The cofactor is Mg(2+).

The protein resides in the cytoplasm. The catalysed reaction is 3-methyl-2-oxobutanoate + (6R)-5,10-methylene-5,6,7,8-tetrahydrofolate + H2O = 2-dehydropantoate + (6S)-5,6,7,8-tetrahydrofolate. It functions in the pathway cofactor biosynthesis; (R)-pantothenate biosynthesis; (R)-pantoate from 3-methyl-2-oxobutanoate: step 1/2. Functionally, catalyzes the reversible reaction in which hydroxymethyl group from 5,10-methylenetetrahydrofolate is transferred onto alpha-ketoisovalerate to form ketopantoate. This chain is 3-methyl-2-oxobutanoate hydroxymethyltransferase, found in Agrobacterium fabrum (strain C58 / ATCC 33970) (Agrobacterium tumefaciens (strain C58)).